The following is a 165-amino-acid chain: Basic leucine zipper 43 (165 aa).

The bZIP domain maps to Asn70–Leu133. The tract at residues Arg72–Arg93 is basic motif. Residues Leu98–Leu112 are leucine-zipper.

Forms heterodimers with BZIP34 and BZIP61.

The protein resides in the nucleus. Functionally, probable transcription factor involved in somatic embryogenesis. Acts as a positive regulator of BHLH109. In Arabidopsis thaliana (Mouse-ear cress), this protein is Basic leucine zipper 43.